The chain runs to 276 residues: Malectin-B (276 aa).

A signal peptide spans 1 to 26 (MLSIRTVLGPLAAILLTVIGPFGAHG). At 27 to 253 (SGLADKVMWA…TPNPYASDNS (227 aa)) the chain is on the lumenal side. The a carbohydrate site is built by Tyr-67, Tyr-89, Tyr-116, Phe-117, and Asp-186. Residues 202-249 (DVPQLQPHPGLEKKEEEEEEEEEEGSPSKKQSNKNRVQSGPRTPNPYA) are disordered. A compositionally biased stretch (acidic residues) spans 216-226 (EEEEEEEEEEG). Positions 229 to 249 (SKKQSNKNRVQSGPRTPNPYA) are enriched in polar residues. An N-linked (GlcNAc...) asparagine glycan is attached at Asn-252. A helical transmembrane segment spans residues 254–274 (SLMFPILVAFGVFIPTLFCLC). Over 275-276 (RL) the chain is Cytoplasmic.

Belongs to the malectin family.

The protein localises to the endoplasmic reticulum membrane. Carbohydrate-binding protein with a strong ligand preference for Glc2-N-glycan. May play a role in the early steps of protein N-glycosylation. Can bind di- or higher oligomers but not monomers of glucose, including maltose, maltotriose, maltotetraose, maltoheptaose, nigerose, kojibose, cellobiose and isomaltose, although based on their subcellular locations, these are unlikely to all be physiological ligands. The chain is Malectin-B from Xenopus laevis (African clawed frog).